We begin with the raw amino-acid sequence, 82 residues long: Putative membrane protein insertion efficiency factor (82 aa).

It belongs to the UPF0161 family.

It localises to the cell inner membrane. Could be involved in insertion of integral membrane proteins into the membrane. The protein is Putative membrane protein insertion efficiency factor of Rickettsia typhi (strain ATCC VR-144 / Wilmington).